The sequence spans 105 residues: Large ribosomal subunit protein uL24 (105 aa).

Belongs to the universal ribosomal protein uL24 family. As to quaternary structure, part of the 50S ribosomal subunit.

One of two assembly initiator proteins, it binds directly to the 5'-end of the 23S rRNA, where it nucleates assembly of the 50S subunit. Its function is as follows. One of the proteins that surrounds the polypeptide exit tunnel on the outside of the subunit. The polypeptide is Large ribosomal subunit protein uL24 (Wolbachia sp. subsp. Brugia malayi (strain TRS)).